The sequence spans 287 residues: MPIKKIISRSNSGIHHSTVIDYKKLLTTNKNKPEKSLLVTLKKHGGRNNQGKITVRHQGGRNKRKYRIIDFKRTHYDNIEATVKSIEYDPNRSCFVSLITYANGAKSYIISPDGIKVGDKILASEHPIDIKPGFSMPLAFIPEGTQVHNIELHPKGGGQIARSAGSYARILGQDETGKYVILQLLSGETRKFLKECRATVGVVSNLDHNLVVIGKAGRNRHRGIRPTVRGSAMNPNDHPHGGGEGRSPVGRDAPRTPWGKRHMGVKTRNMKKASTNLIIRNRKGEQY.

Residues 222–266 are disordered; the sequence is RGIRPTVRGSAMNPNDHPHGGGEGRSPVGRDAPRTPWGKRHMGVK.

Belongs to the universal ribosomal protein uL2 family. Part of the 50S ribosomal subunit. Forms a bridge to the 30S subunit in the 70S ribosome.

One of the primary rRNA binding proteins. Required for association of the 30S and 50S subunits to form the 70S ribosome, for tRNA binding and peptide bond formation. It has been suggested to have peptidyltransferase activity; this is somewhat controversial. Makes several contacts with the 16S rRNA in the 70S ribosome. The polypeptide is Large ribosomal subunit protein uL2 (Mycoplasma pneumoniae (strain ATCC 29342 / M129 / Subtype 1) (Mycoplasmoides pneumoniae)).